The sequence spans 180 residues: Large ribosomal subunit protein uL6c (180 aa).

It belongs to the universal ribosomal protein uL6 family. Part of the 50S ribosomal subunit.

Its subcellular location is the plastid. It localises to the chloroplast. Functionally, binds 23S rRNA. The sequence is that of Large ribosomal subunit protein uL6c (rpl6) from Porphyra purpurea (Red seaweed).